Consider the following 390-residue polypeptide: MSGLHKQFLKKIKEQERAFGLSSLSEDPDESESNSNYFSPTPQPPNELRTDINEERHGHIRETYNDTKRDVFPIADIYTDPRSGVRFQTYFKPPSSSNAPIFICHHGAGSSSMTFCKLAQSLDNEYGKNNEYPGLFTYDMRGHGDSSTTIPPDYSLATITNDCEFIIDEFHAKHALRSSIYLLGHSLGGSVLTSYLVANPDNAYKFKGLIVLDIVEETAIKALSAMPQFVRKRPTTFGDYQEAIDWHIKESHLLHSEESALVSVPDLLRECPNGLIWKTNLQETEPFWETWFTGLSENFINCGKTQHIAKLLVLSGHETLDTNLIIGQMQGKYQLIVFNNTQNTGHFIQEDIPTQISISLVDFVRRNDSPNEYMKKEFGFVPKWGGKIHD.

A disordered region spans residues 19 to 50 (FGLSSLSEDPDESESNSNYFSPTPQPPNELRT). The 233-residue stretch at 100-332 (PIFICHHGAG…NLIIGQMQGK (233 aa)) folds into the AB hydrolase-1 domain. Residues S186, D213, and H346 contribute to the active site.

The protein belongs to the AB hydrolase superfamily.

The catalysed reaction is [phosphatase 2A protein]-C-terminal L-leucine methyl ester + H2O = [phosphatase 2A protein]-C-terminal L-leucine + methanol + H(+). Demethylates proteins that have been reversibly carboxymethylated. Demethylates the phosphatase PP2A catalytic subunit. The chain is Protein phosphatase methylesterase 1 (PPE1) from Debaryomyces hansenii (strain ATCC 36239 / CBS 767 / BCRC 21394 / JCM 1990 / NBRC 0083 / IGC 2968) (Yeast).